The sequence spans 189 residues: dCTP deaminase (189 aa).

Residues lysine 112–arginine 117, threonine 136–glutamate 138, glutamine 157, tyrosine 171, and glutamine 181 each bind dCTP. The Proton donor/acceptor role is filled by glutamate 138.

The protein belongs to the dCTP deaminase family. As to quaternary structure, homotrimer.

The catalysed reaction is dCTP + H2O + H(+) = dUTP + NH4(+). The protein operates within pyrimidine metabolism; dUMP biosynthesis; dUMP from dCTP (dUTP route): step 1/2. Its function is as follows. Catalyzes the deamination of dCTP to dUTP. The protein is dCTP deaminase of Xanthomonas oryzae pv. oryzae (strain MAFF 311018).